Reading from the N-terminus, the 368-residue chain is DNA replication and repair protein RecF (368 aa).

30–37 (GKNGSGKT) contributes to the ATP binding site.

Belongs to the RecF family.

It localises to the cytoplasm. Its function is as follows. The RecF protein is involved in DNA metabolism; it is required for DNA replication and normal SOS inducibility. RecF binds preferentially to single-stranded, linear DNA. It also seems to bind ATP. This is DNA replication and repair protein RecF from Marinomonas sp. (strain MWYL1).